Here is a 576-residue protein sequence, read N- to C-terminus: M-phase inducer phosphatase 2 (576 aa).

Residue serine 42 is modified to Phosphoserine. Positions 90–105 (RRTSECSLSSESSESS) are enriched in low complexity. A disordered region spans residues 90–119 (RRTSECSLSSESSESSDAGLCMDSPSPVDP). At serine 167 the chain carries Phosphoserine; by MELK. Serine 248 carries the phosphoserine modification. Residue serine 321 is modified to Phosphoserine; by MELK and MAPK14. A disordered region spans residues 338–358 (QDRDVPVQSKRRKSVTPLEEQ). Serine 351 carries the phosphoserine; by AURKA modification. A Phosphoserine; by BRSK1 and MAPK14 modification is found at serine 372. A Rhodanese domain is found at 427–534 (IVEKFVIVDC…FFPQHPNFCE (108 aa)). Cysteine 483 is a catalytic residue. Phosphoserine is present on serine 559.

Belongs to the MPI phosphatase family. As to quaternary structure, interacts with MAPK14 and 14-3-3 proteins. In terms of processing, phosphorylated by BRSK1 in vitro. Phosphorylated by CHEK1, which inhibits the activity of this protein. Phosphorylation at Ser-351 by AURKA might locally participate in the control of the onset of mitosis. Phosphorylation by MELK at Ser-167 promotes localization to the centrosome and the spindle poles during mitosis. Phosphorylation at Ser-321 and Ser-372 by MAPK14 is required for binding to 14-3-3 proteins. Expressed predominantly in spleen, lung, heart, brain, intestine, and muscle.

The protein resides in the cytoplasm. It is found in the cytoskeleton. Its subcellular location is the microtubule organizing center. It localises to the centrosome. The protein localises to the spindle pole. It catalyses the reaction O-phospho-L-tyrosyl-[protein] + H2O = L-tyrosyl-[protein] + phosphate. Its activity is regulated as follows. Stimulated by B-type cyclins. In terms of biological role, tyrosine protein phosphatase which functions as a dosage-dependent inducer of mitotic progression. Directly dephosphorylates CDK1 and stimulates its kinase activity. Required for G2/M phases of the cell cycle progression and abscission during cytokinesis in a ECT2-dependent manner. The three isoforms seem to have a different level of activity. The polypeptide is M-phase inducer phosphatase 2 (Cdc25b) (Mus musculus (Mouse)).